We begin with the raw amino-acid sequence, 215 residues long: Protein-L-isoaspartate O-methyltransferase (215 aa).

Ser-62 is an active-site residue.

The protein belongs to the methyltransferase superfamily. L-isoaspartyl/D-aspartyl protein methyltransferase family.

It is found in the cytoplasm. It carries out the reaction [protein]-L-isoaspartate + S-adenosyl-L-methionine = [protein]-L-isoaspartate alpha-methyl ester + S-adenosyl-L-homocysteine. Functionally, catalyzes the methyl esterification of L-isoaspartyl residues in peptides and proteins that result from spontaneous decomposition of normal L-aspartyl and L-asparaginyl residues. It plays a role in the repair and/or degradation of damaged proteins. In Nitratidesulfovibrio vulgaris (strain DSM 19637 / Miyazaki F) (Desulfovibrio vulgaris), this protein is Protein-L-isoaspartate O-methyltransferase.